A 257-amino-acid polypeptide reads, in one-letter code: Aspartate/glutamate leucyltransferase (257 aa).

This sequence belongs to the R-transferase family. Bpt subfamily.

It is found in the cytoplasm. The catalysed reaction is N-terminal L-glutamyl-[protein] + L-leucyl-tRNA(Leu) = N-terminal L-leucyl-L-glutamyl-[protein] + tRNA(Leu) + H(+). It carries out the reaction N-terminal L-aspartyl-[protein] + L-leucyl-tRNA(Leu) = N-terminal L-leucyl-L-aspartyl-[protein] + tRNA(Leu) + H(+). Its function is as follows. Functions in the N-end rule pathway of protein degradation where it conjugates Leu from its aminoacyl-tRNA to the N-termini of proteins containing an N-terminal aspartate or glutamate. This Rhodopseudomonas palustris (strain BisB5) protein is Aspartate/glutamate leucyltransferase.